The chain runs to 277 residues: Protein OPG166 (277 aa).

N-linked (GlcNAc...) asparagine; by host glycans are attached at residues N29 and N58. A run of 5 helical transmembrane segments spans residues 124–144 (TMLM…EITY), 156–176 (GILQ…AFLF), 186–206 (IIGL…KVFS), 219–239 (LIIY…GLSL), and 247–267 (LLLS…LFLV).

This sequence belongs to the orthopoxvirus OPG166 protein family.

Its subcellular location is the host membrane. Functionally, promotes, when overexpressed, the influx of extracellular Ca(2+), leading to membrane permeability and host cell necrosis. The chain is Protein OPG166 (OPG166) from Bos taurus (Bovine).